A 282-amino-acid chain; its full sequence is Elongation factor Ts (282 aa).

The segment at 80–83 (TDFV) is involved in Mg(2+) ion dislocation from EF-Tu.

The protein belongs to the EF-Ts family.

The protein resides in the cytoplasm. Functionally, associates with the EF-Tu.GDP complex and induces the exchange of GDP to GTP. It remains bound to the aminoacyl-tRNA.EF-Tu.GTP complex up to the GTP hydrolysis stage on the ribosome. In Protochlamydia amoebophila (strain UWE25), this protein is Elongation factor Ts.